The chain runs to 23 residues: Testis ecdysiotropin peptide B (23 aa).

Functionally, stimulates synthesis of ecdysteroid in the testes of larvae and pupae. The sequence is that of Testis ecdysiotropin peptide B from Lymantria dispar (Gypsy moth).